The sequence spans 552 residues: Putative phosphate permease MT2339 (552 aa).

Transmembrane regions (helical) follow at residues 38-58 (WHLS…WWAF), 69-89 (ILVL…GNDV), 107-127 (ALLV…GDVT), 146-166 (DFMN…LFAN), 178-198 (IIGG…QGGA), 213-233 (VSWV…YGVI), 326-346 (VPLV…FKGF), 360-380 (FIIA…AKTL), 389-409 (TFLM…FSHG), 437-457 (AVPA…LWFI), 472-492 (MHPA…MGAT), 493-513 (VLGL…GVGI), and 526-546 (IVLA…VGLV).

It belongs to the inorganic phosphate transporter (PiT) (TC 2.A.20) family.

It is found in the cell membrane. Its function is as follows. Potential transporter for phosphate. This Mycobacterium tuberculosis (strain CDC 1551 / Oshkosh) protein is Putative phosphate permease MT2339.